The following is a 193-amino-acid chain: Gas vesicle protein C (193 aa).

Repeats lie at residues 19 to 51, 52 to 84, 85 to 117, 118 to 150, and 151 to 183; these read VAEL…LQAF, YKDL…LLAF, HKEL…LLAF, YQEV…LLAF, and HKEL…LLKF. Residues 19 to 183 are 5 X 33 AA tandem repeats; it reads VAELSLETRE…KEQKESLLKF (165 aa).

This sequence belongs to the gas vesicle GvpC family.

The protein resides in the gas vesicle. Confers stability, involved in shaping gas vesicles (GV), hollow, gas-filled proteinaceous nanostructures. During planktonic growth they allow positioning of the organism at a favorable depth for light or nutrient acquisition. The ratio of GvpA:GvpC is estimated to be 25:1. GvpC strengthens the GV wall, probably by connecting several GvpA proteins in the same and/or adjacent ribs. Removal of GvpC by SDS reduces the critical collapse pressure (CCP) of stored gas vesicles from 0.23 Mpa to 0.08 MPa. Removal of GvpC by urea reduces CCP of freshly isolated GVs from 0.550 MPa to 0.190 MPa; addition of recombinant GvpC restores CCP to 0.508 MPa. As the turgor pressure in this species is usually 0.35 MPa (plus the water column pressure in its growth environment), this protein is essential for GV formation. In Dolichospermum flosaquae (Anabaena flos-aquae), this protein is Gas vesicle protein C.